A 172-amino-acid polypeptide reads, in one-letter code: Cytidylate kinase (172 aa).

ATP is bound at residue Gly4–Thr12.

This sequence belongs to the cytidylate kinase family. Type 2 subfamily.

The protein localises to the cytoplasm. The enzyme catalyses CMP + ATP = CDP + ADP. It catalyses the reaction dCMP + ATP = dCDP + ADP. The chain is Cytidylate kinase (cmk) from Aeropyrum pernix (strain ATCC 700893 / DSM 11879 / JCM 9820 / NBRC 100138 / K1).